A 208-amino-acid polypeptide reads, in one-letter code: Uracil phosphoribosyltransferase (208 aa).

Residues arginine 78, arginine 103, and 130 to 138 contribute to the 5-phospho-alpha-D-ribose 1-diphosphate site; that span reads DPMLATGGS. Residues isoleucine 193 and 198–200 contribute to the uracil site; that span reads GDA. Aspartate 199 is a binding site for 5-phospho-alpha-D-ribose 1-diphosphate.

The protein belongs to the UPRTase family. Mg(2+) serves as cofactor.

It carries out the reaction UMP + diphosphate = 5-phospho-alpha-D-ribose 1-diphosphate + uracil. It participates in pyrimidine metabolism; UMP biosynthesis via salvage pathway; UMP from uracil: step 1/1. With respect to regulation, allosterically activated by GTP. Functionally, catalyzes the conversion of uracil and 5-phospho-alpha-D-ribose 1-diphosphate (PRPP) to UMP and diphosphate. This chain is Uracil phosphoribosyltransferase, found in Roseiflexus castenholzii (strain DSM 13941 / HLO8).